A 300-amino-acid polypeptide reads, in one-letter code: 1D-myo-inositol 2-acetamido-2-deoxy-alpha-D-glucopyranoside deacetylase (300 aa).

The Zn(2+) site is built by histidine 13, aspartate 16, and histidine 147.

This sequence belongs to the MshB deacetylase family. It depends on Zn(2+) as a cofactor.

It carries out the reaction 1D-myo-inositol 2-acetamido-2-deoxy-alpha-D-glucopyranoside + H2O = 1D-myo-inositol 2-amino-2-deoxy-alpha-D-glucopyranoside + acetate. Catalyzes the deacetylation of 1D-myo-inositol 2-acetamido-2-deoxy-alpha-D-glucopyranoside (GlcNAc-Ins) in the mycothiol biosynthesis pathway. This chain is 1D-myo-inositol 2-acetamido-2-deoxy-alpha-D-glucopyranoside deacetylase, found in Mycobacterium avium (strain 104).